The primary structure comprises 1087 residues: Platelet-derived growth factor receptor alpha (1087 aa).

A signal peptide spans 1–23 (MGTPPRTFLILGCFLTGPLLTLC). At 24–528 (QLPLPTIVPN…PTLRSELTVA (505 aa)) the chain is on the extracellular side. Ig-like C2-type domains follow at residues 26 to 104 (PLPT…YNHT), 116 to 208 (IYIY…IYIL), 213 to 312 (QLPV…VHDK), 314 to 411 (FIHL…SLLI), and 414 to 517 (PALI…LKLV). Asn44, Asn75, Asn88, and Asn102 each carry an N-linked (GlcNAc...) asparagine glycan. A disulfide bridge links Cys49 with Cys99. Disulfide bonds link Cys149/Cys189 and Cys235/Cys290. N-linked (GlcNAc...) asparagine glycans are attached at residues Asn353, Asn359, Asn458, and Asn468. A disulfide bridge connects residues Cys435 and Cys501. Residues 529-549 (AAVLVLLVIVIISLIVLVIIW) traverse the membrane as a helical segment. Residues 550-1087 (KQKPRYEIRW…SSDLVEDSFL (538 aa)) are Cytoplasmic-facing. Phosphotyrosine; by autocatalysis occurs at positions 572 and 574. Residues 593–954 (LVLGRILGSG…HLSEIVESLL (362 aa)) form the Protein kinase domain. ATP contacts are provided by residues 599 to 607 (LGSGAFGKV) and Lys627. Tyr720, Tyr731, Tyr742, Tyr754, Tyr762, and Tyr768 each carry phosphotyrosine; by autocatalysis. The active-site Proton acceptor is Asp818. Phosphotyrosine; by autocatalysis occurs at positions 849 and 988. The segment covering 1000-1011 (KDRESGFDEQRL) has biased composition (basic and acidic residues). The interval 1000 to 1059 (KDRESGFDEQRLSADSGYITPLPDIDPVSEDELGKRNRHSSQTSEESAIETGSSSSTFIK) is disordered. Tyr1017 is modified (phosphotyrosine; by autocatalysis). The segment covering 1039–1057 (SSQTSEESAIETGSSSSTF) has biased composition (polar residues).

Belongs to the protein kinase superfamily. Tyr protein kinase family. CSF-1/PDGF receptor subfamily. In terms of assembly, interacts with homodimeric PDGFA, PDGFB and PDGFC, and with heterodimers formed by PDGFA and PDGFB. Monomer in the absence of bound ligand. Interaction with dimeric PDGFA, PDGFB and/or PDGFC leads to receptor dimerization, where both PDGFRA homodimers and heterodimers with PDGFRB are observed. In terms of processing, ubiquitinated, leading to its internalization and degradation. Post-translationally, autophosphorylated on tyrosine residues upon ligand binding. Autophosphorylation occurs in trans, i.e. one subunit of the dimeric receptor phosphorylates tyrosine residues on the other subunit.

It localises to the cell membrane. The protein resides in the cell projection. It is found in the cilium. Its subcellular location is the golgi apparatus. The enzyme catalyses L-tyrosyl-[protein] + ATP = O-phospho-L-tyrosyl-[protein] + ADP + H(+). Present in an inactive conformation in the absence of bound ligand. Binding of PDGFA and/or PDGFB leads to dimerization and activation by autophosphorylation on tyrosine residues. Functionally, tyrosine-protein kinase that acts as a cell-surface receptor for PDGFA, PDGFB and PDGFC and plays an essential role in the regulation of embryonic development, cell proliferation, survival and chemotaxis. Depending on the context, promotes or inhibits cell proliferation and cell migration. Plays an important role in the differentiation of bone marrow-derived mesenchymal stem cells. Required for normal skeleton development. Required for normal development of the gastrointestinal tract. Plays a role in cell migration and chemotaxis in wound healing. Plays a role in platelet activation, secretion of agonists from platelet granules, and in thrombin-induced platelet aggregation. Binding of its cognate ligands - homodimeric PDGFA, homodimeric PDGFB, heterodimers formed by PDGFA and PDGFB or homodimeric PDGFC -leads to the activation of several signaling cascades; the response depends on the nature of the bound ligand and is modulated by the formation of heterodimers between PDGFRA and PDGFRB. Phosphorylates PIK3R1, PLCG1, and PTPN11. Activation of PLCG1 leads to the production of the cellular signaling molecules diacylglycerol and inositol 1,4,5-trisphosphate, mobilization of cytosolic Ca(2+) and the activation of protein kinase C. Phosphorylates PIK3R1, the regulatory subunit of phosphatidylinositol 3-kinase, and thereby mediates activation of the AKT1 signaling pathway. Mediates activation of HRAS and of the MAP kinases MAPK1/ERK2 and/or MAPK3/ERK1. Promotes activation of STAT family members STAT1, STAT3 and STAT5A and/or STAT5B. Receptor signaling is down-regulated by protein phosphatases that dephosphorylate the receptor and its down-stream effectors, and by rapid internalization of the activated receptor. This chain is Platelet-derived growth factor receptor alpha (PDGFRA), found in Gallus gallus (Chicken).